An 876-amino-acid polypeptide reads, in one-letter code: Leucine--tRNA ligase (876 aa).

The 'HIGH' region signature appears at 42–52 (PYPSGKLHMGH). The 'KMSKS' region signature appears at 634–638 (KMSKS). Residue K637 participates in ATP binding.

Belongs to the class-I aminoacyl-tRNA synthetase family.

The protein localises to the cytoplasm. It catalyses the reaction tRNA(Leu) + L-leucine + ATP = L-leucyl-tRNA(Leu) + AMP + diphosphate. The polypeptide is Leucine--tRNA ligase (Neisseria gonorrhoeae (strain ATCC 700825 / FA 1090)).